The primary structure comprises 376 residues: Erythronate-4-phosphate dehydrogenase (376 aa).

Ser45 and Thr67 together coordinate substrate. NAD(+) contacts are provided by residues Asp147, Ala209–Arg211, and Asp235. Arg211 is a catalytic residue. Glu240 is an active-site residue. His257 acts as the Proton donor in catalysis. Gly260 provides a ligand contact to NAD(+). Tyr261 is a binding site for substrate.

The protein belongs to the D-isomer specific 2-hydroxyacid dehydrogenase family. PdxB subfamily. In terms of assembly, homodimer.

The protein localises to the cytoplasm. It carries out the reaction 4-phospho-D-erythronate + NAD(+) = (R)-3-hydroxy-2-oxo-4-phosphooxybutanoate + NADH + H(+). It participates in cofactor biosynthesis; pyridoxine 5'-phosphate biosynthesis; pyridoxine 5'-phosphate from D-erythrose 4-phosphate: step 2/5. Its function is as follows. Catalyzes the oxidation of erythronate-4-phosphate to 3-hydroxy-2-oxo-4-phosphonooxybutanoate. This Aeromonas hydrophila subsp. hydrophila (strain ATCC 7966 / DSM 30187 / BCRC 13018 / CCUG 14551 / JCM 1027 / KCTC 2358 / NCIMB 9240 / NCTC 8049) protein is Erythronate-4-phosphate dehydrogenase.